The following is a 242-amino-acid chain: 3-deoxy-manno-octulosonate cytidylyltransferase (242 aa).

This sequence belongs to the KdsB family.

It is found in the cytoplasm. The enzyme catalyses 3-deoxy-alpha-D-manno-oct-2-ulosonate + CTP = CMP-3-deoxy-beta-D-manno-octulosonate + diphosphate. The protein operates within nucleotide-sugar biosynthesis; CMP-3-deoxy-D-manno-octulosonate biosynthesis; CMP-3-deoxy-D-manno-octulosonate from 3-deoxy-D-manno-octulosonate and CTP: step 1/1. It participates in bacterial outer membrane biogenesis; lipopolysaccharide biosynthesis. Functionally, activates KDO (a required 8-carbon sugar) for incorporation into bacterial lipopolysaccharide in Gram-negative bacteria. The chain is 3-deoxy-manno-octulosonate cytidylyltransferase from Anaeromyxobacter dehalogenans (strain 2CP-C).